The following is a 498-amino-acid chain: ATP synthase subunit beta, chloroplastic (498 aa).

Residue 172–179 (GGAGVGKT) coordinates ATP.

Belongs to the ATPase alpha/beta chains family. In terms of assembly, F-type ATPases have 2 components, CF(1) - the catalytic core - and CF(0) - the membrane proton channel. CF(1) has five subunits: alpha(3), beta(3), gamma(1), delta(1), epsilon(1). CF(0) has four main subunits: a(1), b(1), b'(1) and c(9-12).

The protein resides in the plastid. It is found in the chloroplast thylakoid membrane. The catalysed reaction is ATP + H2O + 4 H(+)(in) = ADP + phosphate + 5 H(+)(out). In terms of biological role, produces ATP from ADP in the presence of a proton gradient across the membrane. The catalytic sites are hosted primarily by the beta subunits. The sequence is that of ATP synthase subunit beta, chloroplastic from Lactuca sativa (Garden lettuce).